A 2109-amino-acid polypeptide reads, in one-letter code: Nonribosomal peptide synthetase sidE (2109 aa).

Residues leucine 31–isoleucine 512 are adenylation 1. Residues alanine 537 to serine 613 form the Carrier 1 domain. Residue serine 574 is modified to O-(pantetheine 4'-phosphoryl)serine. The interval aspartate 646–isoleucine 908 is condensation 1. Residues arginine 1058–alanine 1555 are adenylation 2. Positions proline 1584–serine 1660 constitute a Carrier 2 domain. Serine 1621 bears the O-(pantetheine 4'-phosphoryl)serine mark. The segment at tyrosine 1695–aspartate 1968 is condensation 2.

This sequence belongs to the NRP synthetase family.

It participates in siderophore biosynthesis. Nonribosomal peptide synthetase; part of the siderophore biosynthetic pathway. Aspergillus fumigatus produces four types of siderophores, low-molecular-mass iron chelators, including excreted fusarinine C (FsC) and triacetylfusarinine C (TAFC) for iron uptake and intacellular ferricrocin (FC) for hyphal and hydroxyferricrocin (HFC) for conidial iron distribution and storage. TAFC consists of three N(2)-acetyl-N(5)-anhydromevalonyl-N(5)-hydroxyornithine residues cyclically linked by ester bonds; FC is a cyclic hexapeptide with the structure Gly-Ser-Gly-(N(5)-acetyl-N(5)-hydroxyornithine)x3. The biosynthesis of all four siderophores depends on the hydroxylation of ornithine, catalyzed by the monooxygenase sidA. Subsequently, the pathways for biosynthesis of extra- and intracellular siderophores split. For biosynthesis of extracellular siderophores, the transacylase sidF transfers anhydromevalonyl to N(5)-hydroxyornithine. The required anhydromevalonyl-CoA moiety is derived from mevalonate by CoA ligation and dehydration catalyzed by sidI and sidH respectively. The acetylation of N(5)-hydroxyornithine for FC biosynthesis involves the constitutively expressed sidL. FC is hydroxylated to HFC by an as yet uncharacterized enzyme during conidiation. Assembly of fusarinine C (FsC) and FC is catalyzed by two different nonribosomal peptide synthetases (NRPS), sidD and sidC respectively. Subsequently, sidG catalyzes N2-acetylation of FsC for forming TAFC. Both extra- and intracellular siderophores are crucial for growth during iron limitation and virulence. This Aspergillus fumigatus (strain ATCC MYA-4609 / CBS 101355 / FGSC A1100 / Af293) (Neosartorya fumigata) protein is Nonribosomal peptide synthetase sidE.